The primary structure comprises 197 residues: Nucleoside triphosphate pyrophosphatase (197 aa).

D72 serves as the catalytic Proton acceptor.

It belongs to the Maf family. The cofactor is a divalent metal cation.

It is found in the cytoplasm. The catalysed reaction is a ribonucleoside 5'-triphosphate + H2O = a ribonucleoside 5'-phosphate + diphosphate + H(+). It catalyses the reaction a 2'-deoxyribonucleoside 5'-triphosphate + H2O = a 2'-deoxyribonucleoside 5'-phosphate + diphosphate + H(+). Its function is as follows. Nucleoside triphosphate pyrophosphatase. May have a dual role in cell division arrest and in preventing the incorporation of modified nucleotides into cellular nucleic acids. The sequence is that of Nucleoside triphosphate pyrophosphatase from Corynebacterium glutamicum (strain R).